Here is a 456-residue protein sequence, read N- to C-terminus: Probable hexose phosphate transport protein (456 aa).

11 helical membrane passes run 34 to 54 (IFYSMFLGYVFFYFTRKSFTF), 70 to 90 (LGIIGSTLYITYGISKFVSGV), 113 to 133 (IFFGLSSTIPLFVLFWGINGW), 161 to 181 (VWSTSHNIGGALIPVLTGVAI), 185 to 205 (GWRGAMFIPGIICIIMGFILI), 257 to 277 (YVLSNKWLWFLSFASFFIYVV), 302 to 322 (LCVSLFEIGGLFGMLLAGWLS), 331 to 351 (GPMNVVFSLGLLVSILGLWGT), 363 to 383 (FLFIIGFFLFGPQMMIGLAAA), 394 to 414 (ASGFTGWFAYFGAAFAGYPLG), and 421 to 441 (GWHGFFVALLACALIALILFL).

This sequence belongs to the major facilitator superfamily. Organophosphate:Pi antiporter (OPA) (TC 2.A.1.4) family.

The protein resides in the cell membrane. Its function is as follows. Transport protein for sugar phosphate uptake. The polypeptide is Probable hexose phosphate transport protein (Chlamydia trachomatis serovar D (strain ATCC VR-885 / DSM 19411 / UW-3/Cx)).